The primary structure comprises 522 residues: MSSMQFSSVLPLEGKACISPVRREGSASERLKVGDSSSIRHERASRRMCNGGRGPAATGAQCVLTSDASPADTLVLRTSFRRNYADPNEVAAVILGGGTGTQLFPLTSTRATPAVPIGGCYRLIDIPMSNCFNSGINKIFVMTQFNSASLNRHIHRTYLGGGINFTDGSVEVLAATQMPGEAAGWFRGTADAVRKFIWVLEDYYKNKSIEHILILSGDQLYRMDYMELVQKHVDDNADITLSCAPVGESRASEYGLVKFDSSGRVVQFSEKPKGDDLEAMKVDTSFLNFAIDDPAKYPYIASMGVYVFKRDVLLNLLKSRYAELHDFGSEILPRALHDHNVQAYVFTDYWEDIGTIRSFFDANMALCEQPPKFEFYDPKTPFFTSPRYLPPTKSDKCRIKEAIISHGCFLRECKIEHSIIGVRSRLNSGSELKNAMMMGADSYETEDEISRLMSEGKVPIGVGENTKISNCIIDMNARIGRDVVISNKEGVQEADRPEEGYYIRSGIVVIQKNATIKDGTVV.

A chloroplast-targeting transit peptide spans M1–C62. Over residues S28 to E42 the composition is skewed to basic and acidic residues. Positions S28–G54 are disordered.

Belongs to the bacterial/plant glucose-1-phosphate adenylyltransferase family. Heterotetramer. In terms of tissue distribution, abundantly expressed in the whole grains, a slightly less abundant expression is seen in leaves, while a low level expression is seen in the roots. A greater expression is seen in the endosperm than in the embryo and pericarp layers.

It is found in the plastid. The protein resides in the chloroplast. Its subcellular location is the amyloplast. It catalyses the reaction alpha-D-glucose 1-phosphate + ATP + H(+) = ADP-alpha-D-glucose + diphosphate. The protein operates within glycan biosynthesis; starch biosynthesis. Its activity is regulated as follows. Insensitive to 3'phosphoglycerate and orthophosphate. This protein plays a role in synthesis of starch. It catalyzes the synthesis of the activated glycosyl donor, ADP-glucose from Glc-1-P and ATP. This Triticum aestivum (Wheat) protein is Glucose-1-phosphate adenylyltransferase large subunit, chloroplastic/amyloplastic (AGP-L).